The primary structure comprises 318 residues: Glycine--tRNA ligase alpha subunit (318 aa).

It belongs to the class-II aminoacyl-tRNA synthetase family. In terms of assembly, tetramer of two alpha and two beta subunits.

The protein localises to the cytoplasm. The catalysed reaction is tRNA(Gly) + glycine + ATP = glycyl-tRNA(Gly) + AMP + diphosphate. In Moraxella catarrhalis (Branhamella catarrhalis), this protein is Glycine--tRNA ligase alpha subunit (glyQ).